The chain runs to 298 residues: MDKMALIKELRERTAAGMSDCKKALEVSNWDVEEAISFLKKNGKIKAASKANRISADGLLVEAGNNERAVLVELNCETDFVAHGEEFVALANTVAQTIVANFELVKENGAEAALALKLANSEEILADAISSYSAKCGEKIELRRFVLIDAGTNQSVSTFVHINGKIGAIMLTEGSDAEAARNVAMHLSAMNPEYIFAEDIPGSVLEKFASEFKEPAGFSDKPEKIQETIRKGFVDKKISEVTLLSQKLIMDESKTVQQYLKELKLRLIKAIRFGLGEGIEKKETDFAAEVAEQMSKSM.

The involved in Mg(2+) ion dislocation from EF-Tu stretch occupies residues 78 to 81 (TDFV).

The protein belongs to the EF-Ts family.

It is found in the cytoplasm. Functionally, associates with the EF-Tu.GDP complex and induces the exchange of GDP to GTP. It remains bound to the aminoacyl-tRNA.EF-Tu.GTP complex up to the GTP hydrolysis stage on the ribosome. In Mycoplasmopsis agalactiae (strain NCTC 10123 / CIP 59.7 / PG2) (Mycoplasma agalactiae), this protein is Elongation factor Ts.